Consider the following 52-residue polypeptide: Conotoxin Cal6.25 (52 aa).

Residues 1 to 22 (MKLTHVLIVAVLVLTVCHLTMA) form the signal peptide. Disulfide bonds link C24/C41, C31/C45, and C40/C50.

As to expression, expressed by the venom duct.

The protein resides in the secreted. Its function is as follows. Probable neurotoxin. The protein is Conotoxin Cal6.25 of Californiconus californicus (California cone).